Here is a 229-residue protein sequence, read N- to C-terminus: Heptaprenylglyceryl phosphate synthase (229 aa).

Residue K12 participates in sn-glycerol 1-phosphate binding. Mg(2+)-binding residues include D14 and S40. Sn-glycerol 1-phosphate contacts are provided by residues 159-164, G189, and 209-210; these read YLEYSG and GN.

The protein belongs to the GGGP/HepGP synthase family. Group I subfamily. Homodimer. Mg(2+) is required as a cofactor.

It catalyses the reaction sn-glycerol 1-phosphate + all-trans-heptaprenyl diphosphate = 3-heptaprenyl-sn-glycero-1-phosphate + diphosphate. Its pathway is membrane lipid metabolism; glycerophospholipid metabolism. Functionally, prenyltransferase that catalyzes in vivo the transfer of the heptaprenyl moiety of heptaprenyl pyrophosphate (HepPP; 35 carbon atoms) to the C3 hydroxyl of sn-glycerol-1-phosphate (G1P), producing heptaprenylglyceryl phosphate (HepGP). This reaction is an ether-bond-formation step in the biosynthesis of archaea-type G1P-based membrane lipids found in Bacillales. The chain is Heptaprenylglyceryl phosphate synthase from Bacillus cereus (strain ZK / E33L).